The following is a 160-amino-acid chain: Transcription elongation factor GreA (160 aa).

The protein belongs to the GreA/GreB family.

Necessary for efficient RNA polymerase transcription elongation past template-encoded arresting sites. The arresting sites in DNA have the property of trapping a certain fraction of elongating RNA polymerases that pass through, resulting in locked ternary complexes. Cleavage of the nascent transcript by cleavage factors such as GreA or GreB allows the resumption of elongation from the new 3'terminus. GreA releases sequences of 2 to 3 nucleotides. The polypeptide is Transcription elongation factor GreA (Francisella tularensis subsp. tularensis (strain FSC 198)).